A 518-amino-acid polypeptide reads, in one-letter code: ESX-3 secretion system ATPase EccB3 (518 aa).

The interval methionine 1–valine 26 is disordered. Residues valine 71–phenylalanine 91 traverse the membrane as a helical segment.

This sequence belongs to the EccB family. As to quaternary structure, part of the ESX-3 / type VII secretion system (T7SS), which is composed of cytosolic and membrane components. The ESX-3 membrane complex is composed of EccB3, EccC3, EccD3 and EccE3.

The protein resides in the cell inner membrane. In terms of biological role, an ATPase. Part of the ESX-3 specialized secretion system, which is required for siderophore-mediated iron acquisition and for the secretion of EsxH and EsxG. This chain is ESX-3 secretion system ATPase EccB3, found in Mycolicibacterium smegmatis (strain ATCC 700084 / mc(2)155) (Mycobacterium smegmatis).